The following is a 148-amino-acid chain: Macrodomain Ter protein (148 aa).

This sequence belongs to the MatP family. In terms of assembly, homodimer.

Its subcellular location is the cytoplasm. Its function is as follows. Required for spatial organization of the terminus region of the chromosome (Ter macrodomain) during the cell cycle. Prevents early segregation of duplicated Ter macrodomains during cell division. Binds specifically to matS, which is a 13 bp signature motif repeated within the Ter macrodomain. The chain is Macrodomain Ter protein from Pasteurella multocida (strain Pm70).